We begin with the raw amino-acid sequence, 338 residues long: MFEMKNSTRYILSLLLSIIMGVAVMGSTFAISTTYGTGHTTATVDNLKPVVNCSSYEMVIRTVQGIKVYEYKNTTGVTPGLLRSDALEAYAYTGEGVTFYVNVSDPNGEQDLQTNGAGVDFLLVPQGQSPSNPTYVIHAGFDTSTSGDADLTTLTFYAQWTVPAGAYGCFDVYVKATDKHGACTGYIKKGKIFLNPMIGINVTKDNDAYPAPFTGLSFGNVNPGDTNVPATENVVTIHNIDPDGVGTKIAVFVSATSMTQAGGTGIIPAENIKAHVIKANNMTQSYNTHLQNNVKVLLWQPLKPCHTNALEVNFTLDVPTPLPSGCYGGSITFYGLGL.

3 helical membrane-spanning segments follow: residues 11 to 31, 249 to 269, and 318 to 338; these read ILSLLLSIIMGVAVMGSTFAI, IAVFVSATSMTQAGGTGIIPA, and VPTPLPSGCYGGSITFYGLGL.

The protein localises to the cell membrane. This is an uncharacterized protein from Methanocaldococcus jannaschii (strain ATCC 43067 / DSM 2661 / JAL-1 / JCM 10045 / NBRC 100440) (Methanococcus jannaschii).